Here is a 361-residue protein sequence, read N- to C-terminus: Chorismate synthase (361 aa).

NADP(+) is bound by residues arginine 48 and arginine 54. Residues 125 to 127, 238 to 239, glycine 278, 293 to 297, and arginine 319 each bind FMN; these read RSS, NA, and KPTSS.

The protein belongs to the chorismate synthase family. Homotetramer. FMNH2 serves as cofactor.

The catalysed reaction is 5-O-(1-carboxyvinyl)-3-phosphoshikimate = chorismate + phosphate. It functions in the pathway metabolic intermediate biosynthesis; chorismate biosynthesis; chorismate from D-erythrose 4-phosphate and phosphoenolpyruvate: step 7/7. In terms of biological role, catalyzes the anti-1,4-elimination of the C-3 phosphate and the C-6 proR hydrogen from 5-enolpyruvylshikimate-3-phosphate (EPSP) to yield chorismate, which is the branch point compound that serves as the starting substrate for the three terminal pathways of aromatic amino acid biosynthesis. This reaction introduces a second double bond into the aromatic ring system. The protein is Chorismate synthase of Enterobacter sp. (strain 638).